Consider the following 460-residue polypeptide: NADH-ubiquinone oxidoreductase chain 4 (460 aa).

The next 13 membrane-spanning stretches (helical) occupy residues 22 to 42 (WLWP…ITWL), 61 to 81 (PLST…LLAS), 94 to 113 (RMYI…AFGA), 117 to 139 (IMFY…RWGN), 148 to 168 (TYFL…LLML), 195 to 217 (IWWA…HLWL), 225 to 245 (PVAG…YGMM), 258 to 278 (MVYP…SICL), 285 to 304 (SLIA…GILI), 308 to 330 (WGFT…LFCL), 351 to 371 (IALP…LALP), 394 to 414 (LILT…MFLM), and 436 to 456 (LLMA…ALLW).

It belongs to the complex I subunit 4 family.

It is found in the mitochondrion membrane. It catalyses the reaction a ubiquinone + NADH + 5 H(+)(in) = a ubiquinol + NAD(+) + 4 H(+)(out). Core subunit of the mitochondrial membrane respiratory chain NADH dehydrogenase (Complex I) that is believed to belong to the minimal assembly required for catalysis. Complex I functions in the transfer of electrons from NADH to the respiratory chain. The immediate electron acceptor for the enzyme is believed to be ubiquinone. This chain is NADH-ubiquinone oxidoreductase chain 4 (MT-ND4), found in Gadus morhua (Atlantic cod).